The following is a 119-amino-acid chain: Phosphoribosyl-AMP cyclohydrolase (119 aa).

Residue D77 coordinates Mg(2+). C78 contributes to the Zn(2+) binding site. 2 residues coordinate Mg(2+): D79 and D81. Residues C94 and C101 each contribute to the Zn(2+) site.

It belongs to the PRA-CH family. As to quaternary structure, homodimer. Mg(2+) serves as cofactor. Requires Zn(2+) as cofactor.

The protein localises to the cytoplasm. It carries out the reaction 1-(5-phospho-beta-D-ribosyl)-5'-AMP + H2O = 1-(5-phospho-beta-D-ribosyl)-5-[(5-phospho-beta-D-ribosylamino)methylideneamino]imidazole-4-carboxamide. It participates in amino-acid biosynthesis; L-histidine biosynthesis; L-histidine from 5-phospho-alpha-D-ribose 1-diphosphate: step 3/9. Catalyzes the hydrolysis of the adenine ring of phosphoribosyl-AMP. The polypeptide is Phosphoribosyl-AMP cyclohydrolase (Cereibacter sphaeroides (strain ATCC 17023 / DSM 158 / JCM 6121 / CCUG 31486 / LMG 2827 / NBRC 12203 / NCIMB 8253 / ATH 2.4.1.) (Rhodobacter sphaeroides)).